Here is a 160-residue protein sequence, read N- to C-terminus: MSDNDDIEVESDEEQPRFQSAADKRAHHNALERKRRDHIKDSFHSLRDSVPSLQGEKASRAQILDKATEYIQYMRRKNHTHQQDIDDLKRQNALLEQQVRALEKARSSAQLQTNYPSSDNSLYTNAKGGTISAFDGGSDSSSESEPEEPQSRKKLRMEAS.

Acidic residues predominate over residues 1-13 (MSDNDDIEVESDE). The disordered stretch occupies residues 1-40 (MSDNDDIEVESDEEQPRFQSAADKRAHHNALERKRRDHIK). Serine 2 is modified (N-acetylserine). A phosphoserine mark is found at serine 2 and serine 11. The bHLH domain maps to 23-74 (DKRAHHNALERKRRDHIKDSFHSLRDSVPSLQGEKASRAQILDKATEYIQYM). Residues 29–40 (NALERKRRDHIK) show a composition bias toward basic and acidic residues. Lysine 66 carries the N6-acetyllysine modification. Positions 81–102 (HQQDIDDLKRQNALLEQQVRAL) are leucine-zipper. A disordered region spans residues 104–160 (KARSSAQLQTNYPSSDNSLYTNAKGGTISAFDGGSDSSSESEPEEPQSRKKLRMEAS). Serine 107 is modified (phosphoserine). A compositionally biased stretch (polar residues) spans 107–124 (SSAQLQTNYPSSDNSLYT). N6-acetyllysine occurs at positions 153 and 154.

The protein belongs to the MAX family. In terms of assembly, efficient DNA binding requires dimerization with another bHLH protein. Binds DNA as a heterodimer with MYC or MAD. Part of the E2F6.com-1 complex in G0 phase composed of E2F6, MGA, MAX, TFDP1, CBX3, BAT8, EUHMTASE1, RING1, RNF2, MBLR, L3MBTL2 and YAF2. Component of some MLL1/MLL complex, at least composed of the core components KMT2A/MLL1, ASH2L, HCFC1/HCF1, WDR5 and RBBP5, as well as the facultative components BACC1, CHD8, E2F6, HSP70, INO80C, KANSL1, LAS1L, MAX, MCRS1, MGA, MYST1/MOF, PELP1, PHF20, PRP31, RING2, RUVB1/TIP49A, RUVB2/TIP49B, SENP3, TAF1, TAF4, TAF6, TAF7, TAF9 and TEX10. Interacts with SPAG9. The heterodimer MYC:MAX interacts with ABI1; the interaction may enhance MYC:MAX transcriptional activity. In terms of processing, phosphorylated.

It localises to the nucleus. It is found in the cell projection. The protein resides in the dendrite. In terms of biological role, transcription regulator. Forms a sequence-specific DNA-binding protein complex with MYC or MAD which recognizes the core sequence 5'-CAC[GA]TG-3'. The MYC:MAX complex is a transcriptional activator, whereas the MAD:MAX complex is a repressor. CpG methylation of the recognition site greatly inhibits DNA binding, suggesting that DNA methylation may regulate the MYC:MAX complex in vivo. May repress transcription via the recruitment of a chromatin remodeling complex containing H3 'Lys-9' histone methyltransferase activity. Represses MYC transcriptional activity from E-box elements. The chain is Protein max from Mus musculus (Mouse).